We begin with the raw amino-acid sequence, 123 residues long: Large ribosomal subunit protein bL12 (123 aa).

It belongs to the bacterial ribosomal protein bL12 family. In terms of assembly, homodimer. Part of the ribosomal stalk of the 50S ribosomal subunit. Forms a multimeric L10(L12)X complex, where L10 forms an elongated spine to which 2 to 4 L12 dimers bind in a sequential fashion. Binds GTP-bound translation factors.

Functionally, forms part of the ribosomal stalk which helps the ribosome interact with GTP-bound translation factors. Is thus essential for accurate translation. The polypeptide is Large ribosomal subunit protein bL12 (Clostridium acetobutylicum (strain ATCC 824 / DSM 792 / JCM 1419 / IAM 19013 / LMG 5710 / NBRC 13948 / NRRL B-527 / VKM B-1787 / 2291 / W)).